Here is a 426-residue protein sequence, read N- to C-terminus: Vitamin D3 receptor (426 aa).

The nuclear receptor DNA-binding region spans 21 to 96; the sequence is PRICGVCGDR…IGMMKEFILT (76 aa). 8 residues coordinate Zn(2+): C24, C27, C41, C44, C60, C66, C76, and C79. NR C4-type zinc fingers lie at residues 24-44 and 60-84; these read CGVC…CEGC and CPFN…LKRC. The hinge stretch occupies residues 97–126; it reads DEEVQRKREMILKRKEEEALKDSLRPKLSE. Residues 127 to 422 form the NR LBD domain; sequence EQQRIITTLL…LTPLLFEVFG (296 aa). Residue Y143 participates in calcitriol binding. Residues 147-215 form a disordered region; it reads YSDFSQFRPP…NEEDSDDPSV (69 aa). A compositionally biased stretch (low complexity) spans 175 to 191; sequence SFSGNSSSSCSDHCTSS. A compositionally biased stretch (polar residues) spans 192 to 204; that stretch reads PDTMEPTSFSNQD. A calcitriol-binding site is contributed by S235. The segment at 244–262 is interaction with coactivator LXXLL motif; that stretch reads KMIPGFRDLTPEDQIVLLK. Calcitriol contacts are provided by R272, S276, H304, and H396. The short motif at 415–423 is the 9aaTAD element; sequence PLLFEVFGN.

It belongs to the nuclear hormone receptor family. NR1 subfamily. In terms of assembly, homodimer in the absence of bound vitamin D3. Heterodimer with RXRA after vitamin D3 binding. Interacts with MED1, NCOA1, NCOA2, NCOA3 and NCOA6 coactivators, leading to a strong increase of transcription of target genes. Interacts with the corepressor NCOR1. Interacts with SNW1. Interacts with IRX4, the interaction does not affect its transactivation activity. Interacts with CRY1. Interacts with CRY2 in a ligand-dependent manner. In terms of processing, ubiquitinated by UBR5, leading to its degradation: UBR5 specifically recognizes and binds ligand-bound VDR when it is not associated with coactivators (NCOAs). In presence of NCOAs, the UBR5-degron is not accessible, preventing its ubiquitination and degradation. As to expression, mammary gland, expression increases during lactation. Also found in colon, expression is down-regulated at parturition.

Its subcellular location is the nucleus. The protein localises to the cytoplasm. Functionally, nuclear receptor for calcitriol, the active form of vitamin D3 which mediates the action of this vitamin on cells. Enters the nucleus upon vitamin D3 binding where it forms heterodimers with the retinoid X receptor/RXR. The VDR-RXR heterodimers bind to specific response elements on DNA and activate the transcription of vitamin D3-responsive target genes. Plays a central role in calcium homeostasis. Also functions as a receptor for the secondary bile acid lithocholic acid (LCA) and its metabolites. This is Vitamin D3 receptor (VDR) from Bos taurus (Bovine).